We begin with the raw amino-acid sequence, 434 residues long: Putative ankyrin repeat protein FPV219 (434 aa).

ANK repeat units follow at residues 33–62 (DDLS…DVNL), 66–95 (EVCS…DTDC), 101–131 (HGTP…HEIY), 132–161 (TKNH…DVNT), 165–195 (LYGY…ESYS), 196–225 (LYPS…DVNA), and 229–258 (EGNT…DTSI).

The polypeptide is Putative ankyrin repeat protein FPV219 (Fowlpox virus (strain NVSL) (FPV)).